The chain runs to 310 residues: MTTKNIAIIGECMIELSQKGADLNRGFGGDTLNTAVYISRQVKPDALDVHYVTALGTDSFSSEMMASWQKEGVKTDLIQRLDNKLPGLYFIETDATGERTFYYWRNDAAARYWLESPDADTISQQLAQFDYIYLSGISLAILNQASRARLLTVLRACRANGGKVIFDNNYRPRLWQSKEETRQAYSDMLACTDIAFLTLDDEDMLWGELPVDEVLKRTHGAGVMEVVIKRGADACLVSIQGEALLEVPAIKLPKEKVVDTTAAGDSFSAGYLSVRLNGGSAQDAAKRGHLTASTVIQYRGAIIPLEAMPA.

Substrate-binding positions include 29–33 (GDTLN), Y89, 103–105 (YWR), and R171. ATP contacts are provided by residues 169-171 (NYR), 229-234 (KRGADA), and 262-265 (AAGD). D265 contacts substrate. The active-site Proton acceptor is the D265.

This sequence belongs to the carbohydrate kinase PfkB family.

It catalyses the reaction 2-dehydro-3-deoxy-D-gluconate + ATP = 2-dehydro-3-deoxy-6-phospho-D-gluconate + ADP + H(+). The protein operates within carbohydrate acid metabolism; 2-dehydro-3-deoxy-D-gluconate degradation; D-glyceraldehyde 3-phosphate and pyruvate from 2-dehydro-3-deoxy-D-gluconate: step 1/2. Its function is as follows. Catalyzes the phosphorylation of 2-keto-3-deoxygluconate (KDG) to produce 2-keto-3-deoxy-6-phosphogluconate (KDPG). The chain is 2-dehydro-3-deoxygluconokinase from Dickeya dadantii (strain 3937) (Erwinia chrysanthemi (strain 3937)).